Reading from the N-terminus, the 94-residue chain is Small ribosomal subunit protein bS18 (94 aa).

This sequence belongs to the bacterial ribosomal protein bS18 family. In terms of assembly, part of the 30S ribosomal subunit. Forms a tight heterodimer with protein bS6.

Its function is as follows. Binds as a heterodimer with protein bS6 to the central domain of the 16S rRNA, where it helps stabilize the platform of the 30S subunit. This Acetivibrio thermocellus (strain ATCC 27405 / DSM 1237 / JCM 9322 / NBRC 103400 / NCIMB 10682 / NRRL B-4536 / VPI 7372) (Clostridium thermocellum) protein is Small ribosomal subunit protein bS18.